A 188-amino-acid chain; its full sequence is Elongation factor P (188 aa).

This sequence belongs to the elongation factor P family.

The protein resides in the cytoplasm. It participates in protein biosynthesis; polypeptide chain elongation. Its function is as follows. Involved in peptide bond synthesis. Stimulates efficient translation and peptide-bond synthesis on native or reconstituted 70S ribosomes in vitro. Probably functions indirectly by altering the affinity of the ribosome for aminoacyl-tRNA, thus increasing their reactivity as acceptors for peptidyl transferase. This Streptomyces coelicolor (strain ATCC BAA-471 / A3(2) / M145) protein is Elongation factor P.